A 238-amino-acid chain; its full sequence is Probable transcriptional regulatory protein VS_II1504 (238 aa).

This sequence belongs to the TACO1 family.

The protein resides in the cytoplasm. The chain is Probable transcriptional regulatory protein VS_II1504 from Vibrio atlanticus (strain LGP32) (Vibrio splendidus (strain Mel32)).